Here is a 77-residue protein sequence, read N- to C-terminus: uncharacterized protein (77 aa).

Residues 36–52 (FYQLILKVLSALLLLSV) form a helical membrane-spanning segment.

The protein localises to the membrane. This is an uncharacterized protein from Saccharomyces cerevisiae (strain ATCC 204508 / S288c) (Baker's yeast).